Here is a 369-residue protein sequence, read N- to C-terminus: tRNA pseudouridine synthase D (369 aa).

Aspartate 80 serves as the catalytic Nucleophile. A TRUD domain is found at 156–318 (GIPNWFGEQR…LKQERRALRL (163 aa)).

This sequence belongs to the pseudouridine synthase TruD family.

It catalyses the reaction uridine(13) in tRNA = pseudouridine(13) in tRNA. In terms of biological role, responsible for synthesis of pseudouridine from uracil-13 in transfer RNAs. The polypeptide is tRNA pseudouridine synthase D (Xanthomonas oryzae pv. oryzae (strain KACC10331 / KXO85)).